We begin with the raw amino-acid sequence, 436 residues long: Eukaryotic translation initiation factor 5 (436 aa).

27-34 (GKGNGIKT) lines the GTP pocket. Residues 177–203 (NSDKGSSNDDDDDDWEPEPVEPNGMLS) are disordered. Acidic residues predominate over residues 184-195 (NDDDDDDWEPEP). Positions 216–379 (EKSEEQRLDM…KEAEEETEEE (164 aa)) constitute a W2 domain. The span at 396-408 (LRQQKEKAAREAQ) shows a compositional bias: basic and acidic residues. Positions 396–436 (LRQQKEKAAREAQQKSAKATNGNAAAASGANDEEDLDIDDI) are disordered. The span at 409 to 425 (QKSAKATNGNAAAASGA) shows a compositional bias: low complexity. Over residues 426 to 436 (NDEEDLDIDDI) the composition is skewed to acidic residues.

Belongs to the eIF-2-beta/eIF-5 family.

In terms of biological role, catalyzes the hydrolysis of GTP bound to the 40S ribosomal initiation complex (40S.mRNA.Met-tRNA[F].eIF-2.GTP) with the subsequent joining of a 60S ribosomal subunit resulting in the release of eIF-2 and the guanine nucleotide. The subsequent joining of a 60S ribosomal subunit results in the formation of a functional 80S initiation complex (80S.mRNA.Met-tRNA[F]). The polypeptide is Eukaryotic translation initiation factor 5 (Caenorhabditis elegans).